We begin with the raw amino-acid sequence, 195 residues long: uncharacterized protein (195 aa).

The interval 1 to 35 (MASSSSAALRPFGTARLTPGRQTGRQTQQQISAPE) is disordered. The segment covering 20–30 (GRQTGRQTQQQ) has biased composition (low complexity). The MSP domain maps to 76-184 (GVTVIPRVAR…PASINMALEA (109 aa)).

This is an uncharacterized protein from Caenorhabditis elegans.